A 120-amino-acid polypeptide reads, in one-letter code: ATP-dependent Clp protease adapter protein ClpS (120 aa).

Belongs to the ClpS family. Binds to the N-terminal domain of the chaperone ClpA.

Its function is as follows. Involved in the modulation of the specificity of the ClpAP-mediated ATP-dependent protein degradation. In Pseudomonas savastanoi pv. phaseolicola (strain 1448A / Race 6) (Pseudomonas syringae pv. phaseolicola (strain 1448A / Race 6)), this protein is ATP-dependent Clp protease adapter protein ClpS.